We begin with the raw amino-acid sequence, 338 residues long: Protein FosB (338 aa).

2 disordered regions span residues Met-1–Phe-54 and Ala-80–Leu-179. Composition is skewed to polar residues over residues Ser-13 to Ser-31 and Thr-102 to Tyr-112. The residue at position 27 (Ser-27) is a Phosphoserine. Low complexity predominate over residues Pro-123–Pro-137. The bZIP domain occupies Glu-155–His-218. Positions Lys-157–Arg-182 are basic motif. The tract at residues Leu-183–Leu-211 is leucine-zipper. Disordered regions lie at residues Cys-222 to Leu-276 and Gly-316 to Leu-338. The span at Leu-256–Pro-265 shows a compositional bias: pro residues. 2 stretches are compositionally biased toward polar residues: residues Phe-266–Leu-276 and Gln-318–Leu-338.

The protein belongs to the bZIP family. Fos subfamily. In terms of assembly, heterodimer; binds to DNA as heterodimer. Component of an AP-1 transcription factor complex; composed of FOS-JUN heterodimers. As part of the AP-1 transcription factor complex, forms heterodimers with JUN, JUNB or JUND, thereby binding to the AP-1 consensus sequence and stimulating transcription. Interacts with the BAF multiprotein chromatin-remodeling complex subunits SMARCB1 and SMARCD1. Interacts with ARID1A and JUN. Homodimer under oxidizing conditions and monomer under reducing conditions (in vitro). Heterodimer; binds to DNA as heterodimer. Forms heterodimers with JUNB, JUN or JUND; thereby binding to the AP-1 consensus sequence but does not stimulate transcription. Forms heterodimers with JUND under oxidizing conditions. Post-translationally, phosphorylated. In terms of processing, phosphorylated at Ser-27 by CSNK2A1; phosphorylation increases protein stability and transactivation potential. Expressed in brain, including the preoptic area of the hypothalamus, the main and accessory olfactory bulbs, the pyriform cortex and the hippocampus (at protein level). Expressed in the neurons of the subgranular zone of the dentate gyrus in the hippocampus (at protein level). Expressed in pyramidal cells in CA1 and CA3, in the dentate gyrus and the nucleus accumbens of the striatum (at protein level). As to expression, expressed in the core and shell of the nucleus accumbens of the striatum (at protein level). Expressed in the neurons of the subgranular zone of the dentate gyrus in the hippocampus (at protein level).

It localises to the nucleus. Functionally, heterodimerizes with proteins of the JUN family to form an AP-1 transcription factor complex, thereby enhancing their DNA binding activity to gene promoters containing an AP-1 consensus sequence 5'-TGA[GC]TCA-3' and enhancing their transcriptional activity. As part of the AP-1 complex, facilitates enhancer selection together with cell-type-specific transcription factors by collaboratively binding to nucleosomal enhancers and recruiting the SWI/SNF (BAF) chromatin remodeling complex to establish accessible chromatin. Together with JUN, plays a role in activation-induced cell death of T cells by binding to the AP-1 promoter site of FASLG/CD95L, and inducing its transcription in response to activation of the TCR/CD3 signaling pathway. Exhibits transactivation activity in vitro. Involved in the display of nurturing behavior towards newborns. May play a role in neurogenesis in the hippocampus and in learning and memory-related tasks by regulating the expression of various genes involved in neurogenesis, depression and epilepsy. Implicated in behavioral responses related to morphine reward and spatial memory. Exhibits lower transactivation activity than isoform 1 in vitro. The heterodimer with JUN does not display any transcriptional activity, and may thereby act as an transcriptional inhibitor. May be involved in the regulation of neurogenesis in the hippocampus. May play a role in synaptic modifications in nucleus accumbens medium spiny neurons and thereby play a role in adaptive and pathological reward-dependent learning, including maladaptive responses involved in drug addiction. Seems to be more stably expressed with a half-life of ~9.5 hours in cell culture as compared to 1.5 hours half-life of isoform 1. The protein is Protein FosB of Mus musculus (Mouse).